A 635-amino-acid polypeptide reads, in one-letter code: MASKPGPLTQWPWHNLGNYKYALVAPSAAYSTYRFVTASSAAERDLLNFMVFPMLLLRLLYGQLWITVSRHQTARSKHKIVNKSLDFEQIDRERNWDDQIILTALVFYLVSATMPQAQVAPWWSTKGMVVTAVLHAGPVEFLYYWLHRALHHHWLYARYHSHHHASIVTEPITSVIHPFAEEVVYFVLLAIPILSTVATGTVSVVTANGYLVYIDFMNYLGHCNFELVPKCLFHVFPPLKYLLYTPSFHSLHHTQFRTNYSLFMPVYDYIYGTTDKSSDELYERTLQGRDEAAWRPDVVHLTHLTTPESVFHNRLGFAAVASNPLGAAASGHLLRAASAVASPLLSLFASTFRSEANRLDKLNIETWVIPRFTSHYTSKSDGYKVSRLIEKAVSDAEASGARVLTLGLLNQGYDLNRNGELYVVRKPSLKTKIVDGTSLAVAAVLNMIPQGTKDVLLLGNANKISLVLTLSLCKREIQVRMVNKELYECLKQQLQPEMQEHLVLSCSYSSKVWLVGDGVTDEEQMKAQKGSHFVPYSQFPPNKARNDCVYHCTPALLVPESFENLHVCENWLPRRVMSAWRAAGIVHALEKWDGHECGGRVTGVQKAWSAALARGFRPYDDHHHPGITHDGRGGL.

4 helical membrane passes run 46-66, 100-120, 127-147, and 183-203; these read LLNF…QLWI, IILT…AQVA, GMVV…YWLH, and VVYF…GTVS. Positions 139–273 constitute a Fatty acid hydroxylase domain; it reads VEFLYYWLHR…MPVYDYIYGT (135 aa).

Belongs to the sterol desaturase family. Homodimer. As to expression, expressed in germinating seeds and shoots.

The protein resides in the endoplasmic reticulum membrane. The enzyme catalyses a long-chain fatty aldehyde + 2 NADPH + O2 + H(+) = a long-chain alkane + formate + 2 NADP(+) + H2O. Its function is as follows. Aldehyde decarbonylase involved in the conversion of aldehydes to alkanes. Core component of a very-long-chain alkane synthesis complex. The polypeptide is Very-long-chain aldehyde decarbonylase GL1-6 (Oryza sativa subsp. japonica (Rice)).